We begin with the raw amino-acid sequence, 512 residues long: 2-isopropylmalate synthase (512 aa).

The region spanning 5–268 is the Pyruvate carboxyltransferase domain; the sequence is LIIFDTTLRD…DVGIDTQHIV (264 aa). Residues aspartate 14, histidine 202, histidine 204, and asparagine 239 each contribute to the Mn(2+) site. Positions 394–512 are regulatory domain; that stretch reads GFVSLAQHSE…SKAERVAAQG (119 aa).

It belongs to the alpha-IPM synthase/homocitrate synthase family. LeuA type 1 subfamily. Homodimer. It depends on Mn(2+) as a cofactor.

It is found in the cytoplasm. The catalysed reaction is 3-methyl-2-oxobutanoate + acetyl-CoA + H2O = (2S)-2-isopropylmalate + CoA + H(+). Its pathway is amino-acid biosynthesis; L-leucine biosynthesis; L-leucine from 3-methyl-2-oxobutanoate: step 1/4. Catalyzes the condensation of the acetyl group of acetyl-CoA with 3-methyl-2-oxobutanoate (2-ketoisovalerate) to form 3-carboxy-3-hydroxy-4-methylpentanoate (2-isopropylmalate). This is 2-isopropylmalate synthase from Acidovorax ebreus (strain TPSY) (Diaphorobacter sp. (strain TPSY)).